The chain runs to 375 residues: Putative nuclease YhcG (375 aa).

Interacts with DNA processing enzymes, including the restriction complex HsdMRS, the integrases IntF and IntS, and the recombinase PinE.

May be a nuclease involved in DNA recombination and repair. The polypeptide is Putative nuclease YhcG (yhcG) (Escherichia coli (strain K12)).